The sequence spans 140 residues: MFRMPIVTMERVDSFSAAHRLHSEKLSDAENKETFGKCNNSNGHGHNYVWKVKLRGEVDPTSGMVYDLAKLKKEMSLVLDTVDHRNLDKDVEFFKTTVSTSENVAIYMFEKLKSVMSNPSVLYKVTIEETPKNIFTYKGC.

A Zn(2+)-binding site is contributed by His19. The active-site Proton acceptor is the Cys38. His44 and His46 together coordinate Zn(2+). Active-site charge relay system residues include His84 and Glu129.

The protein belongs to the PTPS family. Homohexamer formed of two homotrimers in a head to head fashion. Requires Zn(2+) as cofactor.

It catalyses the reaction 7,8-dihydroneopterin 3'-triphosphate = 6-pyruvoyl-5,6,7,8-tetrahydropterin + triphosphate + H(+). Its pathway is cofactor biosynthesis; tetrahydrobiopterin biosynthesis; tetrahydrobiopterin from 7,8-dihydroneopterin triphosphate: step 1/3. Involved in the biosynthesis of tetrahydrobiopterin, an essential cofactor of aromatic amino acid hydroxylases. Catalyzes the transformation of 7,8-dihydroneopterin triphosphate into 6-pyruvoyl tetrahydropterin. This Caenorhabditis elegans protein is Putative 6-pyruvoyl tetrahydrobiopterin synthase (ptps-1).